We begin with the raw amino-acid sequence, 154 residues long: Large-conductance mechanosensitive channel (154 aa).

3 helical membrane-spanning segments follow: residues 16–36 (VLGL…ISSV), 39–59 (DLLM…GFFI), and 89–109 (GQFL…FMIM).

This sequence belongs to the MscL family. In terms of assembly, homopentamer.

It is found in the cell inner membrane. In terms of biological role, channel that opens in response to stretch forces in the membrane lipid bilayer. May participate in the regulation of osmotic pressure changes within the cell. The protein is Large-conductance mechanosensitive channel of Zymomonas mobilis subsp. mobilis (strain ATCC 31821 / ZM4 / CP4).